The chain runs to 174 residues: Inosine/xanthosine triphosphatase (174 aa).

Residue D68 participates in Mg(2+) binding. Position 68–69 (68–69 (DA)) interacts with substrate.

Belongs to the YjjX NTPase family. As to quaternary structure, homodimer. Mg(2+) serves as cofactor. Requires Mn(2+) as cofactor.

It catalyses the reaction XTP + H2O = XDP + phosphate + H(+). The catalysed reaction is ITP + H2O = IDP + phosphate + H(+). Functionally, phosphatase that hydrolyzes non-canonical purine nucleotides such as XTP and ITP to their respective diphosphate derivatives. Probably excludes non-canonical purines from DNA/RNA precursor pool, thus preventing their incorporation into DNA/RNA and avoiding chromosomal lesions. The sequence is that of Inosine/xanthosine triphosphatase from Photobacterium profundum (strain SS9).